The following is a 29-amino-acid chain: Cytolysin Uc-1 (29 aa).

The segment covering aspartate 1–serine 15 has biased composition (polar residues). The disordered stretch occupies residues aspartate 1 to valine 29.

The protein resides in the secreted. Its subcellular location is the nematocyst. The protein localises to the target cell membrane. Pore-forming toxin that lyses bovine erythrocytes at nanomolar concentrations. Is devoid of enzymatic activity. Binds to monolayers and efficiently permeabilizes small lipid vesicles composed of sphingomyelin and cholesterol. The cytolytic activity is not prevented by cholesterol or sphingomyelin. This is Cytolysin Uc-1 from Urticina crassicornis (Mottled anemone).